A 495-amino-acid chain; its full sequence is Alkaline protease 2 (495 aa).

A signal peptide spans 1 to 16 (MKGYLSLSILPLLVAA). A propeptide spanning residues 17-136 (SPVVVDSIHN…IEKDSEVHTM (120 aa)) is cleaved from the precursor. Positions 43-136 (SYIVVFKKHV…IEKDSEVHTM (94 aa)) constitute an Inhibitor I9 domain. The region spanning 146–452 (PWGLARISHR…GGSSNYTDII (307 aa)) is the Peptidase S8 domain. Active-site charge relay system residues include aspartate 182 and histidine 214. Asparagine 284 carries N-linked (GlcNAc...) asparagine glycosylation. The active-site Charge relay system is the serine 380. Asparagine 447 and asparagine 460 each carry an N-linked (GlcNAc...) asparagine glycan.

The protein belongs to the peptidase S8 family.

The catalysed reaction is Hydrolysis of proteins with broad specificity, and of Bz-Arg-OEt &gt; Ac-Tyr-OEt. Does not hydrolyze peptide amides.. Alkaline protease that allows assimilation of proteinaceous substrates. Acts as a significant virulence factor in invasive aspergillosis. Required for regular sporulation. The protein is Alkaline protease 2 (alp2) of Aspergillus fumigatus (strain CBS 144.89 / FGSC A1163 / CEA10) (Neosartorya fumigata).